We begin with the raw amino-acid sequence, 469 residues long: Glutamate--tRNA ligase 1 (469 aa).

Residues 10–20 (PSPTGYLHIGG) carry the 'HIGH' region motif. Zn(2+)-binding residues include cysteine 99, cysteine 101, cysteine 126, and aspartate 128. Residues 237 to 241 (RLSKR) carry the 'KMSKS' region motif. Lysine 240 provides a ligand contact to ATP.

Belongs to the class-I aminoacyl-tRNA synthetase family. Glutamate--tRNA ligase type 1 subfamily. In terms of assembly, monomer. Zn(2+) is required as a cofactor.

The protein resides in the cytoplasm. The enzyme catalyses tRNA(Glu) + L-glutamate + ATP = L-glutamyl-tRNA(Glu) + AMP + diphosphate. In terms of biological role, catalyzes the attachment of glutamate to tRNA(Glu) in a two-step reaction: glutamate is first activated by ATP to form Glu-AMP and then transferred to the acceptor end of tRNA(Glu). This Coxiella burnetii (strain RSA 331 / Henzerling II) protein is Glutamate--tRNA ligase 1.